The primary structure comprises 339 residues: UDP-glucose 4-epimerase (339 aa).

Residues 12-13, 32-37, 59-60, 81-85, Asn100, Ser125, Tyr150, Lys154, and Phe179 each bind NAD(+); these read FI, DNLCNS, DI, and FAGLK. Positions 125 and 150 each coordinate substrate. Residue Tyr150 is the Proton acceptor of the active site. Residues Asn180, 200-201, 217-219, Arg232, and 293-296 contribute to the substrate site; these read NL, SVF, and RAGD.

It belongs to the NAD(P)-dependent epimerase/dehydratase family. Homodimer. It depends on NAD(+) as a cofactor.

The catalysed reaction is UDP-alpha-D-glucose = UDP-alpha-D-galactose. Its pathway is carbohydrate metabolism; galactose metabolism. In terms of biological role, involved in the metabolism of galactose. Plays an essential role in the incorporation of galactose into meningococcal lipopolysaccharide surface molecules, which are important for pathogenesis. Catalyzes the conversion of UDP-galactose (UDP-Gal) to UDP-glucose (UDP-Glc) through a mechanism involving the transient reduction of NAD. This Neisseria meningitidis serogroup A / serotype 4A (strain DSM 15465 / Z2491) protein is UDP-glucose 4-epimerase (galE).